Consider the following 146-residue polypeptide: MGRFISVSFGLLVVFLSLSGTGADCLPDWSPYQGHCYRVFNQKMTWADAEKFCTEQANGGHLASFHSSKEVDFMVSLAFPMLKVDFVWIGMSDFWRDCEWKWSDGAKLDYKAWNNELNCFVSKTTDNQWLRWDCSRTNNVACKYPL.

The first 23 residues, 1-23 (MGRFISVSFGLLVVFLSLSGTGA), serve as a signal peptide directing secretion. Cystine bridges form between cysteine 25–cysteine 36, cysteine 53–cysteine 142, and cysteine 119–cysteine 134. The 112-residue stretch at 32 to 143 (YQGHCYRVFN…CSRTNNVACK (112 aa)) folds into the C-type lectin domain.

Belongs to the snaclec family. In terms of assembly, heterodimer; disulfide-linked. As to expression, expressed by the venom gland.

It is found in the secreted. Interferes with one step of hemostasis (modulation of platelet aggregation, or coagulation cascade, for example). The protein is Snaclec CTL-Eoc124 of Echis ocellatus (Ocellated saw-scaled viper).